Reading from the N-terminus, the 77-residue chain is uncharacterized protein (77 aa).

2 4Fe-4S ferredoxin-type domains span residues 3-32 (VEII…WTKD) and 36-65 (KYYA…IKVV). [4Fe-4S] cluster-binding residues include C12, C15, C18, C22, C45, C48, C51, and C55.

Requires [4Fe-4S] cluster as cofactor.

Its function is as follows. Ferredoxins are iron-sulfur proteins that transfer electrons probably in the CO-dehydrogenase complex. This is an uncharacterized protein from Methanocaldococcus jannaschii (strain ATCC 43067 / DSM 2661 / JAL-1 / JCM 10045 / NBRC 100440) (Methanococcus jannaschii).